The chain runs to 81 residues: Accessory gland protein Acp63F (81 aa).

The N-terminal stretch at 1–16 (MKAIIVFILFISSVHA) is a signal peptide.

As to expression, main cells of accessory gland and seminal fluid.

Its subcellular location is the secreted. In terms of biological role, responsible for physiological and behavioral changes in mated female flies. This chain is Accessory gland protein Acp63F (Acp63F), found in Drosophila melanogaster (Fruit fly).